Consider the following 729-residue polypeptide: DNA topoisomerase 3 (729 aa).

Residues 3–136 enclose the Toprim domain; the sequence is KSVVIAEKPS…IKRLWISSVT (134 aa). Glu-9 and Asp-105 together coordinate Mg(2+). One can recognise a Topo IA-type catalytic domain in the interval 153–594; sequence YDNLYASAVA…EMKNYTKEIV (442 aa). The segment at 187–192 is interaction with DNA; the sequence is NCGRVQ. Catalysis depends on Tyr-310, which acts as the O-(5'-phospho-DNA)-tyrosine intermediate. Residues 686–713 are compositionally biased toward basic and acidic residues; it reads ERRKKESGNKADKRDVQKYMKQQKKEEE. Residues 686-718 form a disordered region; sequence ERRKKESGNKADKRDVQKYMKQQKKEEEPLNNP.

This sequence belongs to the type IA topoisomerase family. Requires Mg(2+) as cofactor.

It catalyses the reaction ATP-independent breakage of single-stranded DNA, followed by passage and rejoining.. In terms of biological role, releases the supercoiling and torsional tension of DNA, which is introduced during the DNA replication and transcription, by transiently cleaving and rejoining one strand of the DNA duplex. Introduces a single-strand break via transesterification at a target site in duplex DNA. The scissile phosphodiester is attacked by the catalytic tyrosine of the enzyme, resulting in the formation of a DNA-(5'-phosphotyrosyl)-enzyme intermediate and the expulsion of a 3'-OH DNA strand. The free DNA strand then undergoes passage around the unbroken strand, thus removing DNA supercoils. Finally, in the religation step, the DNA 3'-OH attacks the covalent intermediate to expel the active-site tyrosine and restore the DNA phosphodiester backbone. The chain is DNA topoisomerase 3 from Bacillus thuringiensis subsp. konkukian (strain 97-27).